Here is a 220-residue protein sequence, read N- to C-terminus: MRLVIARCSVDYIGRLKAHLPSAVRLLLVKADGSVSIHADGRAYKPLNWMSPPCVIAEEEGVWRVTNKAEEQLVISIEQILHDSTHELGVDPGLRKDGVEAHLQVLLADRPDAVREGLTLVRREYETGIGPVDLLCRDADGSTVAVEIKRKGEIDGVEQLTRYLSRLDDDPALPHPVRGILCAQSITPQARLLAADRGIACSVVDYDALRGLEPSIPTLF.

It belongs to the NucS endonuclease family.

The protein localises to the cytoplasm. Functionally, cleaves both 3' and 5' ssDNA extremities of branched DNA structures. This is Endonuclease NucS from Parafrankia sp. (strain EAN1pec).